We begin with the raw amino-acid sequence, 472 residues long: WAS protein family homolog DDB_G0292878 (472 aa).

The segment at 279–472 (LPTYDNSNSG…ESDTDSSEWE (194 aa)) is disordered. Polar residues predominate over residues 282–299 (YDNSNSGSAPVNQSSGGD). Residues 300 to 314 (NNVNNNNNNNNSNNS) are compositionally biased toward low complexity. A compositionally biased stretch (pro residues) spans 320-356 (PPQPTNAPPPPPPPPQSANAPPPPPPPPVSAPPPFNP). Positions 363–373 (NDDDDDDDDDN) are enriched in acidic residues. Gly residues predominate over residues 374–383 (GGGGGPGGAI). One can recognise a WH2 domain in the interval 382 to 401 (AIGDLLADIRRGHKNRLKKA). Positions 457–472 (TDDQDGESDTDSSEWE) are enriched in acidic residues.

Belongs to the WASH1 family.

Functionally, acts as a nucleation-promoting factor by activating the Arp2/3 complex to induce actin polymerization. The chain is WAS protein family homolog DDB_G0292878 from Dictyostelium discoideum (Social amoeba).